We begin with the raw amino-acid sequence, 967 residues long: Phosphoenolpyruvate carboxylase 1 (967 aa).

Serine 11 is modified (phosphoserine). Residues histidine 173 and lysine 602 contribute to the active site. Phosphoserine is present on serine 704.

The protein belongs to the PEPCase type 1 family. In terms of assembly, homotetramer. Mg(2+) is required as a cofactor. Mn(2+) serves as cofactor. In terms of processing, the phosphorylation of Ser-11 is reversibly promoted by inorganic phosphate (Pi) deprivation. Enhanced activity by phosphorylation at pH 7.3 by lowering Km and sensitivity to inhibition by L-malate and L-aspartate, while enhancing activation by glucose 6-phosphate. In terms of tissue distribution, expressed in all plant organs, with higher levels in roots.

It is found in the cytoplasm. The catalysed reaction is oxaloacetate + phosphate = phosphoenolpyruvate + hydrogencarbonate. With respect to regulation, by light-reversible phosphorylation. Activated by inorganic phosphate (Pi) deprivation and glucose 6-phosphate. Inhibited by L-malate and L-aspartate. In terms of biological role, through the carboxylation of phosphoenolpyruvate (PEP) it forms oxaloacetate, a four-carbon dicarboxylic acid source for the tricarboxylic acid cycle. Contributes probably to the adaptation to inorganic phosphate (Pi) deprivation. In Arabidopsis thaliana (Mouse-ear cress), this protein is Phosphoenolpyruvate carboxylase 1 (PPC1).